Reading from the N-terminus, the 298-residue chain is Zinc transport system membrane protein TroC (298 aa).

8 helical membrane passes run 16–36 (VVLG…FAVL), 41–61 (LFGD…FLLT), 68–88 (ILLL…LMVM), 97–117 (GAQG…LTHV), 144–164 (VLLI…FWKE), 187–207 (FMLT…VGVI), 229–249 (VLCA…SVVS), and 255–275 (LSTG…SIML).

It belongs to the ABC-3 integral membrane protein family.

The protein resides in the cell membrane. In terms of biological role, part of an ATP-driven transport system TroABCD for zinc. This chain is Zinc transport system membrane protein TroC (troC), found in Treponema pallidum (strain Nichols).